Reading from the N-terminus, the 82-residue chain is Small ribosomal subunit protein uS17 (82 aa).

This sequence belongs to the universal ribosomal protein uS17 family. As to quaternary structure, part of the 30S ribosomal subunit.

Functionally, one of the primary rRNA binding proteins, it binds specifically to the 5'-end of 16S ribosomal RNA. This is Small ribosomal subunit protein uS17 from Shewanella denitrificans (strain OS217 / ATCC BAA-1090 / DSM 15013).